A 542-amino-acid polypeptide reads, in one-letter code: Chaperonin GroEL 3 (542 aa).

Residues 30-33 (TLGP), Lys51, 87-91 (DGTTT), Gly415, and Asp496 contribute to the ATP site.

The protein belongs to the chaperonin (HSP60) family. In terms of assembly, forms a cylinder of 14 subunits composed of two heptameric rings stacked back-to-back. Interacts with the co-chaperonin GroES.

The protein resides in the cytoplasm. It catalyses the reaction ATP + H2O + a folded polypeptide = ADP + phosphate + an unfolded polypeptide.. Functionally, together with its co-chaperonin GroES, plays an essential role in assisting protein folding. The GroEL-GroES system forms a nano-cage that allows encapsulation of the non-native substrate proteins and provides a physical environment optimized to promote and accelerate protein folding. The chain is Chaperonin GroEL 3 from Sinorhizobium medicae (strain WSM419) (Ensifer medicae).